A 110-amino-acid polypeptide reads, in one-letter code: Nucleoid-associated protein PERMA_0533 (110 aa).

This sequence belongs to the YbaB/EbfC family. Homodimer.

It localises to the cytoplasm. The protein localises to the nucleoid. In terms of biological role, binds to DNA and alters its conformation. May be involved in regulation of gene expression, nucleoid organization and DNA protection. The polypeptide is Nucleoid-associated protein PERMA_0533 (Persephonella marina (strain DSM 14350 / EX-H1)).